Here is a 504-residue protein sequence, read N- to C-terminus: Cytochrome P450 3A11 (504 aa).

Cys-443 lines the heme pocket.

Belongs to the cytochrome P450 family. It depends on heme as a cofactor. As to expression, highly expressed in liver.

Its subcellular location is the endoplasmic reticulum membrane. It localises to the microsome membrane. It catalyses the reaction an organic molecule + reduced [NADPH--hemoprotein reductase] + O2 = an alcohol + oxidized [NADPH--hemoprotein reductase] + H2O + H(+). In terms of biological role, catalyzes erythromycin N-demethylation, nifedipine oxidation and testosterone 6 beta-hydroxylation. The sequence is that of Cytochrome P450 3A11 (Cyp3a11) from Mus musculus (Mouse).